Consider the following 510-residue polypeptide: ATP synthase subunit alpha (510 aa).

169 to 176 contributes to the ATP binding site; it reads GDRQTGKS.

It belongs to the ATPase alpha/beta chains family. In terms of assembly, F-type ATPases have 2 components, CF(1) - the catalytic core - and CF(0) - the membrane proton channel. CF(1) has five subunits: alpha(3), beta(3), gamma(1), delta(1), epsilon(1). CF(0) has three main subunits: a(1), b(2) and c(9-12). The alpha and beta chains form an alternating ring which encloses part of the gamma chain. CF(1) is attached to CF(0) by a central stalk formed by the gamma and epsilon chains, while a peripheral stalk is formed by the delta and b chains.

The protein localises to the cell membrane. The catalysed reaction is ATP + H2O + 4 H(+)(in) = ADP + phosphate + 5 H(+)(out). Functionally, produces ATP from ADP in the presence of a proton gradient across the membrane. The alpha chain is a regulatory subunit. The polypeptide is ATP synthase subunit alpha (Wigglesworthia glossinidia brevipalpis).